Here is a 314-residue protein sequence, read N- to C-terminus: Ribosomal RNA small subunit methyltransferase H (314 aa).

Residues 58 to 60 (GGH), Asp76, Phe103, Asp119, and Gln126 contribute to the S-adenosyl-L-methionine site.

Belongs to the methyltransferase superfamily. RsmH family.

The protein resides in the cytoplasm. The catalysed reaction is cytidine(1402) in 16S rRNA + S-adenosyl-L-methionine = N(4)-methylcytidine(1402) in 16S rRNA + S-adenosyl-L-homocysteine + H(+). Its function is as follows. Specifically methylates the N4 position of cytidine in position 1402 (C1402) of 16S rRNA. This Gloeobacter violaceus (strain ATCC 29082 / PCC 7421) protein is Ribosomal RNA small subunit methyltransferase H.